A 794-amino-acid chain; its full sequence is Inactive zinc metalloprotease C354.09c (794 aa).

The interval 1 to 56 (MTDEKHVYVPPPKDPPSYEEVALHSALNNSAPPNDGEQNETSMEEMEIIEPPSEDS) is disordered. A helical transmembrane segment spans residues 91 to 111 (IPFQFLYLAVIATVIILASYY).

It belongs to the peptidase M28 family. M28B subfamily.

It localises to the membrane. The sequence is that of Inactive zinc metalloprotease C354.09c from Schizosaccharomyces pombe (strain 972 / ATCC 24843) (Fission yeast).